The following is a 1129-amino-acid chain: MSVEAYGPSSQTLTFLDTEEAELLGADTQGSEFEFTDFTLPSQTQTPPGGPGGPGGGGAGGPGGAGAGAAAGQLDAQVGPEGILQNGAVDDSVAKTSQLLAELNFEEDEEDTYYTKDLPIHACSYCGIHDPACVVYCNTSKKWFCNGRGNTSGSHIVNHLVRAKCKEVTLHKDGPLGETVLECYNCGCRNVFLLGFIPAKADSVVVLLCRQPCASQSSLKDINWDSSQWQPLIQDRCFLSWLVKIPSEQEQLRARQITAQQINKLEELWKENPSATLEDLEKPGVDEEPQHVLLRYEDAYQYQNIFGPLVKLEADYDKKLKESQTQDNITVRWDLGLNKKRIAYFTLPKTDSGNEDLVIIWLRDMRLMQGDEICLRYKGDLAPLWKGIGHVIKVPDNYGDEIAIELRSSVGAPVEVTHNFQVDFVWKSTSFDRMQSALKTFAVDETSVSGYIYHKLLGHEVEDVIIKCQLPKRFTAQGLPDLNHSQVYAVKTVLQRPLSLIQGPPGTGKTVTSATIVYHLARQGNGPVLVCAPSNIAVDQLTEKIHQTGLKVVRLCAKSREAIDSPVSFLALHNQIRNMDSMPELQKLQQLKDETGELSSADEKRYRALKRTAERELLMNADVICCTCVGAGDPRLAKMQFRSILIDESTQATEPECMVPVVLGAKQLILVGDHCQLGPVVMCKKAAKAGLSQSLFERLVVLGIRPIRLQVQYRMHPALSAFPSNIFYEGSLQNGVTAADRVKKGFDFQWPQPDKPMFFYVTQGQEEIASSGTSYLNRTEAANVEKITTKLLKAGAKPDQIGIITPYEGQRSYLVQYMQFSGSLHTKLYQEVEIASVDAFQGREKDFIILSCVRANEHQGIGFLNDPRRLNVALTRARYGVIIVGNPKALSKQPLWNHLLNYYKEQKVLVEGPLNNLRESLMQFSKPRKLVNTINPGARFMTTAMYDAREAIIPGSVYDRSSQGRPSSMYFQTHDQIGMISAGPSHVAAMNIPIPFNLVMPPMPPPGYFGQANGPAAGRGTPKGKTGRGGRQKNRFGLPGPSQTNLPNSQASQDVASQPFSQGALTQGYISMSQPSQMSQPGLSQPELSQDSYLGDEFKSQIDVALSQDSTYQGERAYQHGGVTGLSQY.

Residues 1 to 415 (MSVEAYGPSS…LRSSVGAPVE (415 aa)) form a sufficient for interaction with RENT2 region. Serine 10 and serine 31 each carry phosphoserine. Residues 39-70 (TLPSQTQTPPGGPGGPGGGGAGGPGGAGAGAA) are disordered. A compositionally biased stretch (gly residues) spans 52–69 (GGPGGGGAGGPGGAGAGA). The Upf1 CH-rich domain occupies 115-272 (TKDLPIHACS…NKLEELWKEN (158 aa)). Zn(2+)-binding residues include cysteine 123, cysteine 126, cysteine 137, serine 140, cysteine 145, histidine 155, histidine 159, cysteine 165, cysteine 183, cysteine 186, cysteine 209, and cysteine 213. Positions 123–155 (CSYCGIHDPACVVYCNTSKKWFCNGRGNTSGSH) are C3H. The interval 137–165 (CNTSKKWFCNGRGNTSGSHIVNHLVRAKC) is CC/SHH/C. The segment at 183–213 (CYNCGCRNVFLLGFIPAKADSVVVLLCRQPC) is C4. ATP is bound by residues glutamine 486 and 506–510 (GTGKT). Serine 565 carries the post-translational modification Phosphoserine. ATP contacts are provided by glutamine 676, tyrosine 713, and glutamate 844. Residue serine 956 is modified to Phosphoserine. Disordered stretches follow at residues 1009–1058 (FGQA…VASQ) and 1073–1096 (SQPS…YLGD). Arginine 1019 bears the Omega-N-methylarginine mark. Positions 1025–1034 (KTGRGGRQKN) are enriched in basic residues. Residues 1041–1058 (PSQTNLPNSQASQDVASQ) show a composition bias toward polar residues. Residues 1073–1086 (SQPSQMSQPGLSQP) are compositionally biased toward low complexity. Serine 1089, serine 1107, serine 1110, and serine 1127 each carry phosphoserine. 2 short sequence motifs ([ST]-Q motif) span residues 1089–1090 (SQ) and 1107–1108 (SQ). The disordered stretch occupies residues 1110-1129 (STYQGERAYQHGGVTGLSQY).

The protein belongs to the DNA2/NAM7 helicase family. Found in a post-splicing messenger ribonucleoprotein (mRNP) complex. Associates with the exon junction complex (EJC). Associates with the SGM1C complex; is phosphorylated by the complex kinase component SGM1. Part of a complex composed of SMG1, DHX34 and UPF1; within the complex DHX34 acts as a scaffolding protein to facilitate SMG1 phosphorylation of UPF1. Interacts with UPF2. Interacts with UPF3A and UPF3B. Interacts with EST1A. Interacts with SLBP. Interacts (when hyperphosphorylated) with PNRC2. Interacts with AGO1 and AGO2. Interacts with GSPT2. Interacts with isoform 1 and isoform 5 of ADAR/ADAR1. Interacts with SMG7. Interacts with ZC3H12A; this interaction occurs in a mRNA translationally active- and termination-dependent manner and is essential for ZC3H12A-mediated degradation of target mRNAs. Interacts with CPSF6. Interacts with MOV10; the interaction is direct and RNA-dependent. Interacts with SHFL; the interaction increases in the presence of RNA. Interacts with UPF2 and DDX4; interactions are mediated by TDRD6. Interacts with DHX34 and PABPC1/PABP1; the interactions are RNA-independent. Interacts with RBM46. As to quaternary structure, (Microbial infection) Interacts with human T-cell leukemia virus 1/HTLV-1 protein Tax; this interaction inhibits the host nonsense-mediated mRNA decay (NMD). In terms of processing, phosphorylated by SMG1; required for formation of mRNA surveillance complexes. In terms of tissue distribution, ubiquitous.

The protein localises to the cytoplasm. It localises to the P-body. Its subcellular location is the nucleus. It is found in the perinuclear region. It carries out the reaction ATP + H2O = ADP + phosphate + H(+). In terms of biological role, RNA-dependent helicase required for nonsense-mediated decay (NMD) of aberrant mRNAs containing premature stop codons and modulates the expression level of normal mRNAs. Is recruited to mRNAs upon translation termination and undergoes a cycle of phosphorylation and dephosphorylation; its phosphorylation appears to be a key step in NMD. Recruited by release factors to stalled ribosomes together with the SMG1C protein kinase complex to form the transient SURF (SMG1-UPF1-eRF1-eRF3) complex. In EJC-dependent NMD, the SURF complex associates with the exon junction complex (EJC) (located 50-55 or more nucleotides downstream from the termination codon) through UPF2 and allows the formation of an UPF1-UPF2-UPF3 surveillance complex which is believed to activate NMD. Phosphorylated UPF1 is recognized by EST1B/SMG5, SMG6 and SMG7 which are thought to provide a link to the mRNA degradation machinery involving exonucleolytic and endonucleolytic pathways, and to serve as adapters to protein phosphatase 2A (PP2A), thereby triggering UPF1 dephosphorylation and allowing the recycling of NMD factors. UPF1 can also activate NMD without UPF2 or UPF3, and in the absence of the NMD-enhancing downstream EJC indicative for alternative NMD pathways. Plays a role in replication-dependent histone mRNA degradation at the end of phase S; the function is independent of UPF2. For the recognition of premature termination codons (PTC) and initiation of NMD a competitive interaction between UPF1 and PABPC1 with the ribosome-bound release factors is proposed. The ATPase activity of UPF1 is required for disassembly of mRNPs undergoing NMD. Together with UPF2 and dependent on TDRD6, mediates the degradation of mRNA harboring long 3'UTR by inducing the NMD machinery. Also capable of unwinding double-stranded DNA and translocating on single-stranded DNA. The polypeptide is Regulator of nonsense transcripts 1 (Homo sapiens (Human)).